A 263-amino-acid polypeptide reads, in one-letter code: Interleukin-22 receptor subunit alpha-2 (263 aa).

A signal peptide spans 1-21; that stretch reads MMPKHCFLGFLISFFLTGVAG. Fibronectin type-III domains lie at 26–68, 100–161, and 162–263; these read HESL…KIMF, GQRQ…TKID, and PPVM…VEIP. Residue Asn56 is glycosylated (N-linked (GlcNAc...) asparagine). Cys110 and Cys118 are oxidised to a cystine. Residues Asn166, Asn171, Asn192, and Asn209 are each glycosylated (N-linked (GlcNAc...) asparagine). A disulfide bridge connects residues Cys238 and Cys259.

It belongs to the type II cytokine receptor family. Expressed in placenta, spleen, breast, skin and lung. Also detected in intestinal tract, testis, brain, heart and thymus. No expression found in prostate, bladder, kidney, ovary, muscle, bone marrow, liver and uterus. Isoform 1 is expressed only in placenta. Isoform 2 is expressed in placenta and breast and at lower level in spleen, skin, thymus and stomach.

Its subcellular location is the secreted. Isoform 2 is a receptor for IL22. Binds to IL22, prevents interaction with the functional IL-22R complex and blocks the activity of IL22 (in vitro). May play an important role as an IL22 antagonist in the regulation of inflammatory responses. Its function is as follows. Isoform 1 may play a role in establishing and maintaining successful pregnancy. This is Interleukin-22 receptor subunit alpha-2 (IL22RA2) from Homo sapiens (Human).